Consider the following 227-residue polypeptide: Chloronitrobenzene nitroreductase (227 aa).

14-18 (RRTKR) contacts FMN. An NADP(+)-binding site is contributed by serine 44. FMN is bound by residues 172 to 173 (GL) and arginine 215.

The protein belongs to the nitroreductase family. FMN serves as cofactor.

It carries out the reaction N-phenylhydroxylamine + 2 NADP(+) + H2O = nitrobenzene + 2 NADPH + 2 H(+). It functions in the pathway xenobiotic degradation; nitrobenzene degradation. The protein operates within xenobiotic degradation; 4-chloronitrobenzene degradation. Involved in the biodegradation of chlorinated nitroaromatic compounds. Catalyzes the reduction of 4-chloronitrobenzene to yield 1-hydroxylamino-4-chlorobenzene. Probably also able to catalyze the two-electron reduction of nitrobenzene (NB) to produce a nitrosobenzene (NOB) intermediate, which is immediately reduced to hydroxylaminobenzene (HAB) by a second two-electron transfer. The sequence is that of Chloronitrobenzene nitroreductase from Comamonas testosteroni (Pseudomonas testosteroni).